A 268-amino-acid polypeptide reads, in one-letter code: Undecaprenyl-diphosphatase (268 aa).

Transmembrane regions (helical) follow at residues 47 to 67, 83 to 103, 109 to 129, 144 to 164, 184 to 204, 218 to 238, and 246 to 266; these read FTVL…FAKL, FVIG…IAGK, LFNP…LMWV, FPLP…IPGV, AAEF…AYDF, TVAI…KAFL, and FTFF…ALAL.

It belongs to the UppP family.

The protein resides in the cell inner membrane. The catalysed reaction is di-trans,octa-cis-undecaprenyl diphosphate + H2O = di-trans,octa-cis-undecaprenyl phosphate + phosphate + H(+). Catalyzes the dephosphorylation of undecaprenyl diphosphate (UPP). Confers resistance to bacitracin. The protein is Undecaprenyl-diphosphatase of Nitrobacter winogradskyi (strain ATCC 25391 / DSM 10237 / CIP 104748 / NCIMB 11846 / Nb-255).